The primary structure comprises 296 residues: NADH-cytochrome b5 reductase 2 (296 aa).

Residues 12-29 (LPIALGVGAASIATAIIL) form a helical membrane-spanning segment. The FAD-binding FR-type domain occupies 47–151 (NEWIDLPIIK…KGPITKWEWK (105 aa)). Residue 154–189 (SYDSITLLGAGTGINPLYQLVHHIAENPEDNTKIHL) participates in FAD binding.

This sequence belongs to the flavoprotein pyridine nucleotide cytochrome reductase family. FAD serves as cofactor.

It localises to the mitochondrion outer membrane. It catalyses the reaction 2 Fe(III)-[cytochrome b5] + NADH = 2 Fe(II)-[cytochrome b5] + NAD(+) + H(+). In terms of biological role, may mediate the reduction of outer membrane cytochrome b5. This is NADH-cytochrome b5 reductase 2 (MCR1) from Kluyveromyces lactis (strain ATCC 8585 / CBS 2359 / DSM 70799 / NBRC 1267 / NRRL Y-1140 / WM37) (Yeast).